Reading from the N-terminus, the 634-residue chain is Extracellular metalloproteinase mep (634 aa).

Positions 1–18 are cleaved as a signal peptide; that stretch reads MRGLLLAGALALPASVFA. Residues 19-245 constitute a propeptide that is removed on maturation; that stretch reads HPAHQSYGLN…IHGVVDYVAE (227 aa). Residue Asn286 is glycosylated (N-linked (GlcNAc...) asparagine). His429 contributes to the Zn(2+) binding site. Glu430 is an active-site residue. Residue His433 coordinates Zn(2+).

The protein belongs to the peptidase M36 family. Zn(2+) serves as cofactor.

It is found in the secreted. Secreted metalloproteinase that allows assimilation of proteinaceous substrates and probably acts as a virulence factor. This Aspergillus fumigatus (strain CBS 144.89 / FGSC A1163 / CEA10) (Neosartorya fumigata) protein is Extracellular metalloproteinase mep (mep).